A 492-amino-acid polypeptide reads, in one-letter code: Protein KOKOPELLI (492 aa).

Disordered stretches follow at residues 218–354 and 394–426; these read VTSP…RNVM and SKFHHKHQEKSKERKRPMSESKGLTTHKQQHQG. The segment covering 256-270 has biased composition (acidic residues); sequence QETETFDDDSSETEA. Over residues 287-305 the composition is skewed to low complexity; it reads STSQEYSGETGSSSGSEWE. A compositionally biased stretch (polar residues) spans 317–336; that stretch reads ESSYPPQNDDSVSEVSTSPP. 2 stretches are compositionally biased toward basic and acidic residues: residues 337–348 and 403–412; these read HTDRDTSREPGK and KSKERKRPMS.

In terms of tissue distribution, mostly expressed in pollen and open flowers and, to a lower extent, in closed flowers.

In terms of biological role, positively regulates reproductive function by facilitating male gametophyte formation and double fertilization. The protein is Protein KOKOPELLI of Arabidopsis thaliana (Mouse-ear cress).